A 421-amino-acid polypeptide reads, in one-letter code: Enolase (421 aa).

Position 165 (glutamine 165) interacts with (2R)-2-phosphoglycerate. Glutamate 207 acts as the Proton donor in catalysis. Mg(2+) is bound by residues aspartate 244, glutamate 285, and aspartate 312. (2R)-2-phosphoglycerate-binding residues include lysine 337, arginine 366, serine 367, and lysine 388. Catalysis depends on lysine 337, which acts as the Proton acceptor.

The protein belongs to the enolase family. Mg(2+) is required as a cofactor.

Its subcellular location is the cytoplasm. It is found in the secreted. The protein resides in the cell surface. It carries out the reaction (2R)-2-phosphoglycerate = phosphoenolpyruvate + H2O. It participates in carbohydrate degradation; glycolysis; pyruvate from D-glyceraldehyde 3-phosphate: step 4/5. Catalyzes the reversible conversion of 2-phosphoglycerate (2-PG) into phosphoenolpyruvate (PEP). It is essential for the degradation of carbohydrates via glycolysis. This Ehrlichia canis (strain Jake) protein is Enolase.